The chain runs to 474 residues: Trigger factor (474 aa).

The region spanning 174 to 261 is the PPIase FKBP-type domain; the sequence is GDIAVVSFKG…LKDLKEKELP (88 aa). Residues 435–474 are disordered; sequence VKEKTTKTSKATKTSKTTKATKTASKTTKTTKTQNKKEKK. Over residues 442 to 467 the composition is skewed to low complexity; the sequence is TSKATKTSKTTKATKTASKTTKTTKT.

Belongs to the FKBP-type PPIase family. Tig subfamily.

It is found in the cytoplasm. The enzyme catalyses [protein]-peptidylproline (omega=180) = [protein]-peptidylproline (omega=0). Functionally, involved in protein export. Acts as a chaperone by maintaining the newly synthesized protein in an open conformation. Functions as a peptidyl-prolyl cis-trans isomerase. This chain is Trigger factor, found in Prochlorococcus marinus (strain AS9601).